A 254-amino-acid polypeptide reads, in one-letter code: Urease accessory protein UreF (254 aa).

The span at 1–11 (MDKGKSVKSTE) shows a compositional bias: basic and acidic residues. The disordered stretch occupies residues 1 to 26 (MDKGKSVKSTEKSVGMPPKTPKTDNN).

Belongs to the UreF family. UreH, UreF and UreG form a complex that acts as a GTP-hydrolysis-dependent molecular chaperone, activating the urease apoprotein by helping to assemble the nickel containing metallocenter of UreC. The UreE protein probably delivers the nickel.

The protein resides in the cytoplasm. Its function is as follows. Required for maturation of urease via the functional incorporation of the urease nickel metallocenter. This Helicobacter pylori (strain ATCC 700392 / 26695) (Campylobacter pylori) protein is Urease accessory protein UreF.